The chain runs to 293 residues: Bifunctional protein FolD (293 aa).

NADP(+)-binding positions include 164–166, S193, and T234; that span reads GRS.

This sequence belongs to the tetrahydrofolate dehydrogenase/cyclohydrolase family. As to quaternary structure, homodimer.

It carries out the reaction (6R)-5,10-methylene-5,6,7,8-tetrahydrofolate + NADP(+) = (6R)-5,10-methenyltetrahydrofolate + NADPH. It catalyses the reaction (6R)-5,10-methenyltetrahydrofolate + H2O = (6R)-10-formyltetrahydrofolate + H(+). The protein operates within one-carbon metabolism; tetrahydrofolate interconversion. In terms of biological role, catalyzes the oxidation of 5,10-methylenetetrahydrofolate to 5,10-methenyltetrahydrofolate and then the hydrolysis of 5,10-methenyltetrahydrofolate to 10-formyltetrahydrofolate. In Azobacteroides pseudotrichonymphae genomovar. CFP2, this protein is Bifunctional protein FolD.